Consider the following 450-residue polypeptide: uncharacterized protein (450 aa).

Residues 387-416 are compositionally biased toward basic and acidic residues; it reads ELDEKNNNKEENKNQDLHEPKESSSEDLLK. The disordered stretch occupies residues 387–439; that stretch reads ELDEKNNNKEENKNQDLHEPKESSSEDLLKRLNNLKINTNEGPVQDNENHDNE.

This is an uncharacterized protein from Saccharomyces cerevisiae (strain ATCC 204508 / S288c) (Baker's yeast).